We begin with the raw amino-acid sequence, 523 residues long: Tyrosine-protein kinase transforming protein Src (523 aa).

The segment at 1 to 50 is disordered; that stretch reads MGSSKSKPKDPSQRRRSLEPPDSTHHGGFPASQTPNKTAAPDTHRTPSRS. A lipid anchor (N-myristoyl glycine; by host) is attached at glycine 2. Positions 7–25 are enriched in basic and acidic residues; sequence KPKDPSQRRRSLEPPDSTH. One can recognise an SH3 domain in the interval 71-139; the sequence is TSPQRAGALA…PSNYVAPSDS (69 aa). Positions 145–242 constitute an SH2 domain; that stretch reads WYFGKITRRE…GLCHRLTNVC (98 aa). The Protein kinase domain occupies 264 to 514; that stretch reads LRLEVKLGQG…TFEYLQAQLL (251 aa). Residues 270-278 and lysine 292 contribute to the ATP site; that span reads LGQGYFGEV. Residue aspartate 383 is the Proton acceptor of the active site. Tyrosine 413 carries the phosphotyrosine; by autocatalysis modification.

It belongs to the protein kinase superfamily. Tyr protein kinase family. SRC subfamily. In terms of assembly, homodimer. The phosphorylated form is termed pp60v-src.

The catalysed reaction is L-tyrosyl-[protein] + ATP = O-phospho-L-tyrosyl-[protein] + ADP + H(+). Functionally, this phosphoprotein, required for both the initiation and the maintenance of neoplastic transformation, is a protein kinase that catalyzes the phosphorylation of tyrosine residues in vitro. The chain is Tyrosine-protein kinase transforming protein Src (V-SRC) from Gallus gallus (Chicken).